The primary structure comprises 463 residues: L-seryl-tRNA(Sec) selenium transferase (463 aa).

Lysine 295 carries the post-translational modification N6-(pyridoxal phosphate)lysine.

Belongs to the SelA family. In terms of assembly, homodecamer; pentamer of dimers. Binds only one seryl-tRNA(Sec) per dimer. Requires pyridoxal 5'-phosphate as cofactor.

The protein resides in the cytoplasm. It catalyses the reaction L-seryl-tRNA(Sec) + selenophosphate + H(+) = L-selenocysteinyl-tRNA(Sec) + phosphate. The protein operates within aminoacyl-tRNA biosynthesis; selenocysteinyl-tRNA(Sec) biosynthesis; selenocysteinyl-tRNA(Sec) from L-seryl-tRNA(Sec) (bacterial route): step 1/1. Functionally, converts seryl-tRNA(Sec) to selenocysteinyl-tRNA(Sec) required for selenoprotein biosynthesis. This is L-seryl-tRNA(Sec) selenium transferase from Escherichia coli O6:H1 (strain CFT073 / ATCC 700928 / UPEC).